We begin with the raw amino-acid sequence, 478 residues long: GDP-fucose protein O-fucosyltransferase 3 (478 aa).

Residues 1–9 lie on the Cytoplasmic side of the membrane; that stretch reads MVRIQRGKL. Residues 10 to 30 traverse the membrane as a helical; Signal-anchor for type II membrane protein segment; it reads LAFCLCVMATVFLLITLQVVV. The Lumenal segment spans residues 31-478; sequence ELGKFEGKKF…QEFWALVFKD (448 aa). Residues Asn-110 and Asn-168 are each glycosylated (N-linked (GlcNAc...) asparagine). Cys-389 and Cys-392 form a disulfide bridge.

Belongs to the glycosyltransferase 10 family.

The protein localises to the endoplasmic reticulum membrane. The enzyme catalyses L-threonyl-[protein] + GDP-beta-L-fucose = 3-O-(alpha-L-fucosyl)-L-threonyl-[protein] + GDP + H(+). The catalysed reaction is L-seryl-[protein] + GDP-beta-L-fucose = 3-O-(alpha-L-fucosyl)-L-seryl-[protein] + GDP + H(+). It functions in the pathway protein modification; protein glycosylation. Its function is as follows. Protein O-fucosyltransferase that specifically catalyzes O-fucosylation of serine or threonine residues in EMI domains of target proteins, such as MMRN1, MMRN2 and EMID1. Attaches fucose through an O-glycosidic linkage. O-fucosylation of EMI domain-containing proteins may be required for facilitating protein folding and secretion. May also show alpha-(1,3)-fucosyltransferase activity toward the innermost N-acetyl glucosamine (GlcNAc) residue in biantennary N-glycan acceptors. However, this was tested with a library of synthetic substrates and this activity is unsure in vivo. May be involved in biosynthesis of Lewis X-carrying biantennary N-glycans that regulate neuron stem cell self-renewal during brain development. The sequence is that of GDP-fucose protein O-fucosyltransferase 3 (FUT10) from Bos taurus (Bovine).